The sequence spans 400 residues: Phosphoglycerate kinase (400 aa).

Residues 22–24 (DFN), Arg38, 61–64 (HLGR), Arg119, and Arg152 each bind substrate. Residues Lys205, Gly296, Glu327, and 353-356 (GGDT) each bind ATP.

The protein belongs to the phosphoglycerate kinase family. As to quaternary structure, monomer.

The protein resides in the cytoplasm. The enzyme catalyses (2R)-3-phosphoglycerate + ATP = (2R)-3-phospho-glyceroyl phosphate + ADP. Its pathway is carbohydrate degradation; glycolysis; pyruvate from D-glyceraldehyde 3-phosphate: step 2/5. The polypeptide is Phosphoglycerate kinase (Campylobacter jejuni subsp. jejuni serotype O:23/36 (strain 81-176)).